The sequence spans 782 residues: Chondroitin proteoglycan 4 (782 aa).

A signal peptide spans Met1–Pro18. N-linked (GlcNAc...) asparagine glycans are attached at residues Asn76, Asn208, Asn462, Asn468, Asn474, and Asn503. The segment at Ile513–Lys726 is disordered. 5 stretches are compositionally biased toward low complexity: residues Glu520 to Gly532, Ser548 to Glu566, Ser573 to Thr612, Phe662 to Ser672, and Ser688 to Gly722. Residue Asn559 is glycosylated (N-linked (GlcNAc...) asparagine). Ser691 is a glycosylation site (O-linked (Xyl...) (chondroitin sulfate) serine). A glycan (N-linked (GlcNAc...) asparagine) is linked at Asn699. Ser701, Ser704, Ser708, Ser714, and Ser721 each carry an O-linked (Xyl...) (chondroitin sulfate) serine glycan. The N-linked (GlcNAc...) asparagine glycan is linked to Asn743.

The chain is Chondroitin proteoglycan 4 from Caenorhabditis elegans.